We begin with the raw amino-acid sequence, 824 residues long: A-adding tRNA nucleotidyltransferase (824 aa).

2 consecutive CBS domains span residues 305-363 (MNTP…DEPI) and 367-423 (VNRD…LEKL). 459-462 (GVVR) contributes to the ATP binding site. Positions 472 and 474 each coordinate Mg(2+). Residues 545 to 546 (RD), N550, 590 to 599 (DPVRILRALR), R603, and R632 contribute to the ATP site.

Belongs to the tRNA nucleotidyltransferase/poly(A) polymerase family. Mg(2+) serves as cofactor.

It catalyses the reaction a tRNA with a 3' CC end + ATP = a tRNA with a 3' CCA end + diphosphate. Its function is as follows. tRNA nucleotidyltransferase involved in the synthesis of the tRNA CCA terminus. Adds the terminal adenosine residue to tRNA. Can incorporate CMP into tRNA ending with C74C75 (tRNACC), with very weak efficiency. The chain is A-adding tRNA nucleotidyltransferase from Aquifex aeolicus (strain VF5).